Here is a 399-residue protein sequence, read N- to C-terminus: Presilphiperfolan-8-beta-ol synthase (399 aa).

The tract at residues 1–60 is disordered; the sequence is MAIPALEPQLHDADTSSNNMSSNSTDSGYDTNSTTPLEKSEKPNTQELKQQQLDPKRPPF. The span at 15–27 shows a compositional bias: low complexity; it reads TSSNNMSSNSTDS. The span at 28–37 shows a compositional bias: polar residues; sequence GYDTNSTTPL. The Mg(2+) site is built by Asp141, Asn285, and Ser289. Positions 141–145 match the DDXXD motif motif; sequence DDQFD. 2 residues coordinate (2E,6E)-farnesyl diphosphate: Arg373 and Tyr374.

Belongs to the terpene synthase family. Requires Mg(2+) as cofactor.

The enzyme catalyses (2E,6E)-farnesyl diphosphate + H2O = presilphiperfolan-8beta-ol + diphosphate. It functions in the pathway secondary metabolite biosynthesis. Presilphiperfolan-8-beta-ol synthase; part of the gene cluster that mediates the biosynthesis of botrydial. Botrydial is necessary for colonization of plant tissue by the T4 strain. It is a strain-dependent virulence factor since highly aggressive strains like SAS56 or B05 still retain substantial virulence when botrydial synthesis is impaired, since they produce also botcinic acid. The first step of botrydial biosynthesis is performed by the sesquiterpene synthase BOT2 which catalyzes the cyclization of farnesyl diphosphate (FPP) to presilphiperfolan-8-beta-ol (PSP). The cytochrome P450 monooxygenase BOT4 then catalyzes the hydroxylation at C-4 to give a probotryane intermediate. Acetylation of the hydroxyl at C-4 is carried out by the acetyltransferase BOT5, followed by the combined action of the P450 monooxygenases BOT3 and BOT1, to yield finally the glycol, via the regio- and stereospecific hydroxylations at C-10 and C-15 of the probotryane intermediates, respectively. The cleavage of the C10-C15 bond of probotryane skeleton is an intriguing and chemically important reaction, which could be mediated by some of the monooxygenases or by a combination of them. It is possible that either BOT3 or BOT1 would oxidize either the 10- or the 15-hydroxy group to the hydroperoxide derivative, which would then undergo heterolytic fragmentation to give the dialdehyde botrydial. Finally, the dehydrogenase BOT7 might be involved in the conversion of botrydial to dihydrobotrydial. This chain is Presilphiperfolan-8-beta-ol synthase (BOT2), found in Botryotinia fuckeliana (Noble rot fungus).